We begin with the raw amino-acid sequence, 203 residues long: Small ribosomal subunit protein uS4 (203 aa).

Positions 93–154 constitute an S4 RNA-binding domain; sequence RRFDNVVFRA…KSKNMDAVTE (62 aa).

Belongs to the universal ribosomal protein uS4 family. As to quaternary structure, part of the 30S ribosomal subunit. Contacts protein S5. The interaction surface between S4 and S5 is involved in control of translational fidelity.

Its function is as follows. One of the primary rRNA binding proteins, it binds directly to 16S rRNA where it nucleates assembly of the body of the 30S subunit. With S5 and S12 plays an important role in translational accuracy. The sequence is that of Small ribosomal subunit protein uS4 from Prosthecochloris aestuarii (strain DSM 271 / SK 413).